Reading from the N-terminus, the 629-residue chain is Dual specificity tyrosine-phosphorylation-regulated kinase 1B (629 aa).

Y63 carries the post-translational modification Phosphotyrosine. The tract at residues 67–86 (KKRRAQQAPPQDSSTKKEKK) is disordered. The short motif at 69-86 (RRAQQAPPQDSSTKKEKK) is the Bipartite nuclear localization signal element. A phosphotyrosine mark is found at Y92 and Y111. A Protein kinase domain is found at 111-431 (YEIDSLIGKG…PLGALQHGFF (321 aa)). Residue 117-125 (IGKGSFGQV) participates in ATP binding. Position 129 is a phosphotyrosine (Y129). Position 140 (K140) interacts with ATP. Y171 is subject to Phosphotyrosine. 190 to 193 (FELL) serves as a coordination point for ATP. D239 (proton acceptor) is an active-site residue. The residue at position 262 (S262) is a Phosphoserine. A Phosphotyrosine; by autocatalysis modification is found at Y271. The residue at position 273 (Y273) is a Phosphotyrosine. The interval 380–399 (GVQTGGPGGRRAGEPGHSPA) is disordered. Y401 is modified (phosphotyrosine). 2 disordered regions span residues 436 to 480 (DEAT…SNDN) and 496 to 629 (PITD…AASS). Over residues 438 to 477 (ATNTGPAGSSASTSPAPLDTCPSSSTASSISSSGGSSGSS) the composition is skewed to low complexity. The segment at 480–520 (NRAYRYSNRYCGGPGPPITDCEMNSPQVLPSQPLRPWAGGD) is interaction with RANBP9. Composition is skewed to pro residues over residues 552–562 (PPSPTSPPPPE) and 574–585 (DCSPPPPAPAPQ). Phosphoserine is present on S624.

Belongs to the protein kinase superfamily. CMGC Ser/Thr protein kinase family. MNB/DYRK subfamily. In terms of assembly, dimer. Interacts with DCOHM, MAP2K3/MKK3, RANBP9 and TCF1/HNF1A. Part of a complex consisting of RANBP9, RAN, DYRK1B and COPS5. Interacts with DCAF7. Interacts with RNF169. In terms of processing, phosphorylated by MAP kinase. Tyrosine phosphorylation may be required for dimerization. Isoform 1 and isoform 2 are broadly expressed. Isoform 3 seems specific for skeletal muscle (at protein level).

The protein localises to the nucleus. It is found in the nucleolus. Its subcellular location is the chromosome. It catalyses the reaction L-seryl-[protein] + ATP = O-phospho-L-seryl-[protein] + ADP + H(+). The catalysed reaction is L-threonyl-[protein] + ATP = O-phospho-L-threonyl-[protein] + ADP + H(+). It carries out the reaction L-tyrosyl-[protein] + ATP = O-phospho-L-tyrosyl-[protein] + ADP + H(+). With respect to regulation, inhibited by RANBP9. Functionally, dual-specificity kinase which possesses both serine/threonine and tyrosine kinase activities. Plays an essential role in ribosomal DNA (rDNA) double-strand break repair and rDNA copy number maintenance. During DNA damage, mediates transcription silencing in part via phosphorylating and enforcing DSB accumulation of the histone methyltransferase EHMT2. Enhances the transcriptional activity of TCF1/HNF1A and FOXO1. Inhibits epithelial cell migration. Mediates colon carcinoma cell survival in mitogen-poor environments. Inhibits the SHH and WNT1 pathways, thereby enhancing adipogenesis. In addition, promotes expression of the gluconeogenic enzyme glucose-6-phosphatase catalytic subunit 1 (G6PC1). In Mus musculus (Mouse), this protein is Dual specificity tyrosine-phosphorylation-regulated kinase 1B (Dyrk1b).